The primary structure comprises 145 residues: MLTAEEKAAVTGFWGKVKVDEVGAEALGRLLVVYPWTQRFFEHFGDLSSADAVMNNAKVKAHGKKVLBSFSNGMKHLDDLKGTFAQLSELHCDKLHVBPZBFRXXXXXXXXXXXXHHGSEFTPVLQAZFQKVVAGVANALAHRYH.

One can recognise a Globin domain in the interval Met1 to His145. Residue Thr11 is modified to Phosphothreonine. Residue Lys58 is modified to N6-acetyllysine. Residue His62 participates in heme b binding. At Lys81 the chain carries N6-acetyllysine. His91 contributes to the heme b binding site. The residue at position 92 (Cys92) is an S-nitrosocysteine.

The protein belongs to the globin family. As to quaternary structure, heterotetramer of two alpha chains and two beta chains. Red blood cells.

In terms of biological role, involved in oxygen transport from the lung to the various peripheral tissues. The polypeptide is Hemoglobin subunit beta (HBB) (Ovis aries musimon (Mouflon)).